Consider the following 202-residue polypeptide: uncharacterized protein (202 aa).

This is an uncharacterized protein from Pseudanabaena tenuis (strain PCC 7409).